The sequence spans 653 residues: MADVPADLAAVWPRVLEQLLGEGRGQGVEVKDEHWIKRCQPLALVADTALLAVPNEFAKGVLEGRLAPIVSETLSRECGRPIRIAITVDDSAGEPPASASPAPPRYEEPELPSGPGQGRDPYESRGREGYEGYGRHRADDHRQGHNDRHQGGPGDQLPPSRGDQLPTARPAYPDYQRPEPGAWPRPSQDDYGWQQQRLGFPERDPYASPSQDYRPQSMDRPSYDQDRPSYDHDRPSYDHDRPSYEQQRADYDQQRSDYDKRPDRRNIPDSSPGSGHVHRGGPVGSALPASSGAPGPLAAQPAPATGPGEPTARLNPKYLFDTFVIGASNRFAHAAAVAVAEAPAKAYNPLFIYGESGLGKTHLLHAIGHYARSLYPGTRVRYVSSEEFTNEFINSIRDGKGDSFRKRYREMDILLVDDIQFLADKESTQEEFFHTFNTLHNANKQIVLSSDRPPKQLVTLEDRLRNRFEWGLITDVQPPELETRIAILRKKAVQEQLNAPPEVLEFIASRISRNIRELEGALIRVTAFASLNRQPVDLGLTEIVLKDLIPGGEDSAPEITAPAIMAATADYFGLTVEDLCGTSRGRALVTARQIAMYLCRELTDLSLPKIGAQFGGRDHTTVMHADRKIRALMAERRSIYNQVTELTNRIKNG.

Positions 1–100 are domain I, interacts with DnaA modulators; sequence MADVPADLAA…SAGEPPASAS (100 aa). A disordered region spans residues 86-310; it reads ITVDDSAGEP…PAPATGPGEP (225 aa). The tract at residues 101–312 is domain II; sequence PAPPRYEEPE…PATGPGEPTA (212 aa). Basic and acidic residues-rich tracts occupy residues 120–150 and 221–267; these read DPYE…DRHQ and PSYD…RRNI. The span at 284–310 shows a compositional bias: low complexity; the sequence is GSALPASSGAPGPLAAQPAPATGPGEP. The tract at residues 313–529 is domain III, AAA+ region; the sequence is RLNPKYLFDT…GALIRVTAFA (217 aa). ATP contacts are provided by G357, G359, K360, and T361. The segment at 530–653 is domain IV, binds dsDNA; it reads SLNRQPVDLG…TELTNRIKNG (124 aa).

The protein belongs to the DnaA family. In terms of assembly, oligomerizes as a right-handed, spiral filament on DNA at oriC.

Its subcellular location is the cytoplasm. Plays an essential role in the initiation and regulation of chromosomal replication. ATP-DnaA binds to the origin of replication (oriC) to initiate formation of the DNA replication initiation complex once per cell cycle. Binds the DnaA box (a 9 base pair repeat at the origin) and separates the double-stranded (ds)DNA. Forms a right-handed helical filament on oriC DNA; dsDNA binds to the exterior of the filament while single-stranded (ss)DNA is stabiized in the filament's interior. The ATP-DnaA-oriC complex binds and stabilizes one strand of the AT-rich DNA unwinding element (DUE), permitting loading of DNA polymerase. After initiation quickly degrades to an ADP-DnaA complex that is not apt for DNA replication. Binds acidic phospholipids. In Streptomyces avermitilis (strain ATCC 31267 / DSM 46492 / JCM 5070 / NBRC 14893 / NCIMB 12804 / NRRL 8165 / MA-4680), this protein is Chromosomal replication initiator protein DnaA.